We begin with the raw amino-acid sequence, 270 residues long: 4-hydroxy-tetrahydrodipicolinate reductase (270 aa).

NAD(+) is bound by residues 11–16 and glutamate 37; that span reads GASGRM. Arginine 38 is a binding site for NADP(+). Residues 101 to 103 and 125 to 128 contribute to the NAD(+) site; these read GTT and SPNM. The active-site Proton donor/acceptor is histidine 158. Residue histidine 159 coordinates (S)-2,3,4,5-tetrahydrodipicolinate. Lysine 162 acts as the Proton donor in catalysis. 168–169 is a binding site for (S)-2,3,4,5-tetrahydrodipicolinate; sequence GT.

This sequence belongs to the DapB family.

The protein resides in the cytoplasm. It catalyses the reaction (S)-2,3,4,5-tetrahydrodipicolinate + NAD(+) + H2O = (2S,4S)-4-hydroxy-2,3,4,5-tetrahydrodipicolinate + NADH + H(+). It carries out the reaction (S)-2,3,4,5-tetrahydrodipicolinate + NADP(+) + H2O = (2S,4S)-4-hydroxy-2,3,4,5-tetrahydrodipicolinate + NADPH + H(+). The protein operates within amino-acid biosynthesis; L-lysine biosynthesis via DAP pathway; (S)-tetrahydrodipicolinate from L-aspartate: step 4/4. Its function is as follows. Catalyzes the conversion of 4-hydroxy-tetrahydrodipicolinate (HTPA) to tetrahydrodipicolinate. This Shewanella denitrificans (strain OS217 / ATCC BAA-1090 / DSM 15013) protein is 4-hydroxy-tetrahydrodipicolinate reductase.